Here is a 132-residue protein sequence, read N- to C-terminus: L-ectoine synthase (132 aa).

This sequence belongs to the ectoine synthase family.

It carries out the reaction (2S)-4-acetamido-2-aminobutanoate = L-ectoine + H2O. Its pathway is amine and polyamine biosynthesis; ectoine biosynthesis; L-ectoine from L-aspartate 4-semialdehyde: step 3/3. Catalyzes the circularization of gamma-N-acetyl-alpha,gamma-diaminobutyric acid (ADABA) to ectoine (1,4,5,6-tetrahydro-2-methyl-4-pyrimidine carboxylic acid), which is an excellent osmoprotectant. This chain is L-ectoine synthase, found in Saccharophagus degradans (strain 2-40 / ATCC 43961 / DSM 17024).